A 195-amino-acid polypeptide reads, in one-letter code: Protein GrpE (195 aa).

Positions 1–30 (MSEQEKVEQEEISAELETQNEQEKPMEETE) are disordered. Positions 10 to 20 (EEISAELETQN) are enriched in acidic residues.

The protein belongs to the GrpE family. Homodimer.

It is found in the cytoplasm. Participates actively in the response to hyperosmotic and heat shock by preventing the aggregation of stress-denatured proteins, in association with DnaK and GrpE. It is the nucleotide exchange factor for DnaK and may function as a thermosensor. Unfolded proteins bind initially to DnaJ; upon interaction with the DnaJ-bound protein, DnaK hydrolyzes its bound ATP, resulting in the formation of a stable complex. GrpE releases ADP from DnaK; ATP binding to DnaK triggers the release of the substrate protein, thus completing the reaction cycle. Several rounds of ATP-dependent interactions between DnaJ, DnaK and GrpE are required for fully efficient folding. In Histophilus somni (strain 2336) (Haemophilus somnus), this protein is Protein GrpE.